The following is a 491-amino-acid chain: Protein DETOXIFICATION 20 (491 aa).

12 consecutive transmembrane segments (helical) span residues 37–57 (LWVV…VSMV), 75–95 (ITFT…AGAL), 120–140 (IVLT…GPIL), 156–176 (LALW…CQMF), 185–205 (IISY…WLLV), 214–234 (GAMT…LLYV), 265–285 (GGML…TGNL), 296–316 (AICI…LAAV), 337–357 (LIAV…FLFL), 381–401 (LLAF…VAIG), 413–433 (LACY…VVGL), and 438–458 (VWIG…VMTL).

It belongs to the multi antimicrobial extrusion (MATE) (TC 2.A.66.1) family.

The protein localises to the membrane. In Arabidopsis thaliana (Mouse-ear cress), this protein is Protein DETOXIFICATION 20.